A 543-amino-acid polypeptide reads, in one-letter code: Probable protein kinase UbiB (543 aa).

Positions 123–500 (DFDQQPLASA…HRRHAQARFL (378 aa)) constitute a Protein kinase domain. Residues 129–137 (LASASVAQV) and Lys-152 contribute to the ATP site. The active-site Proton acceptor is the Asp-286. 2 helical membrane passes run 499 to 519 (FLLGAGATLLLGSILLLPTHE) and 521 to 541 (LASAGLTISIICWLNGWWKIS).

This sequence belongs to the ABC1 family. UbiB subfamily.

The protein localises to the cell inner membrane. The protein operates within cofactor biosynthesis; ubiquinone biosynthesis [regulation]. Its function is as follows. Is probably a protein kinase regulator of UbiI activity which is involved in aerobic coenzyme Q (ubiquinone) biosynthesis. In Tolumonas auensis (strain DSM 9187 / NBRC 110442 / TA 4), this protein is Probable protein kinase UbiB.